We begin with the raw amino-acid sequence, 498 residues long: E3 ubiquitin-protein ligase TRIM22 (498 aa).

The segment at 15–60 (CPICLELLTEPLSLDCGHSFCQACITAKIKESVIISRGESSCPVCQ) adopts an RING-type zinc-finger fold. The B box-type zinc-finger motif lies at 92–133 (QKRDVCEHHGKKLQIFCKEDGKVICWVCELSQEHQGHQTFRI). Zn(2+) is bound by residues cysteine 97, histidine 100, cysteine 119, and histidine 125. Positions 132–248 (RINEVVKECQ…RRLRGSSVEM (117 aa)) form a coiled coil. The Nuclear localization signal motif lies at 257–275 (KRSESWTLKKPKSVSKKLK). Residues 283–498 (LSGMLQVLKE…VPMTVCPPSS (216 aa)) form the B30.2/SPRY domain.

Belongs to the TRIM/RBCC family. As to quaternary structure, homotrimer. In terms of assembly, (Microbial infection) Interacts with HIV-1 Gag polyprotein; this interaction seems to reduce gag production or virus budding. (Microbial infection) Interacts with EMCV protease 3C; this interaction leads to viral protease ubiquitination. Auto-ubiquitinated. As to expression, strongly expressed in peripheral blood leukocytes, spleen, thymus, and ovary. Expressed at basal levels in other tissues.

Its subcellular location is the cytoplasm. The protein resides in the nucleus. It is found in the nucleus speckle. The protein localises to the cajal body. The enzyme catalyses S-ubiquitinyl-[E2 ubiquitin-conjugating enzyme]-L-cysteine + [acceptor protein]-L-lysine = [E2 ubiquitin-conjugating enzyme]-L-cysteine + N(6)-ubiquitinyl-[acceptor protein]-L-lysine.. It participates in protein modification; protein ubiquitination. Interferon-induced E3 ubiquitin ligase that plays important roles in innate and adaptive immunity. Restricts the replication of many viruses including HIV-1, encephalomyocarditis virus (EMCV), hepatitis B virus (HBV), hepatitis C virus (HCV) or Zika virus (ZIKV). Mechanistically, negatively regulates HCV replication by promoting ubiquitination and subsequent degradation of viral NS5A. Also acts by promoting the degradation of Zika virus NS1 and NS3 proteins through proteasomal degradation. Acts as a suppressor of basal HIV-1 LTR-driven transcription by preventing Sp1 binding to the HIV-1 promoter. Also plays a role in antiviral immunity by co-regulating together with NT5C2 the RIGI/NF-kappa-B pathway by promoting 'Lys-63'-linked ubiquitination of RIGI, while NT5C2 is responsible for 'Lys-48'-linked ubiquitination of RIGI. Participates in adaptive immunity by suppressing the amount of MHC class II protein in a negative feedback manner in order to limit the extent of MHC class II induction. In Homo sapiens (Human), this protein is E3 ubiquitin-protein ligase TRIM22 (TRIM22).